A 95-amino-acid chain; its full sequence is Small ribosomal subunit protein uS15 (95 aa).

It belongs to the universal ribosomal protein uS15 family. Part of the 30S ribosomal subunit. Forms a bridge to the 50S subunit in the 70S ribosome, contacting the 23S rRNA.

In terms of biological role, one of the primary rRNA binding proteins, it binds directly to 16S rRNA where it helps nucleate assembly of the platform of the 30S subunit by binding and bridging several RNA helices of the 16S rRNA. Functionally, forms an intersubunit bridge (bridge B4) with the 23S rRNA of the 50S subunit in the ribosome. This is Small ribosomal subunit protein uS15 from Streptomyces coelicolor (strain ATCC BAA-471 / A3(2) / M145).